Reading from the N-terminus, the 238-residue chain is 3-dehydroquinate dehydratase (238 aa).

Residues 35 to 37 and Arg70 each bind 3-dehydroquinate; that span reads ELR. Residue His133 is the Proton donor/acceptor of the active site. The active-site Schiff-base intermediate with substrate is the Lys160. 2 residues coordinate 3-dehydroquinate: Arg202 and Gln225.

The protein belongs to the type-I 3-dehydroquinase family. Homodimer.

It carries out the reaction 3-dehydroquinate = 3-dehydroshikimate + H2O. It functions in the pathway metabolic intermediate biosynthesis; chorismate biosynthesis; chorismate from D-erythrose 4-phosphate and phosphoenolpyruvate: step 3/7. Its function is as follows. Involved in the third step of the chorismate pathway, which leads to the biosynthesis of aromatic amino acids. Catalyzes the cis-dehydration of 3-dehydroquinate (DHQ) and introduces the first double bond of the aromatic ring to yield 3-dehydroshikimate. This is 3-dehydroquinate dehydratase from Staphylococcus aureus (strain MSSA476).